The chain runs to 552 residues: Ribulokinase (552 aa).

The protein belongs to the ribulokinase family.

The enzyme catalyses D-ribulose + ATP = D-ribulose 5-phosphate + ADP + H(+). The catalysed reaction is L-ribulose + ATP = L-ribulose 5-phosphate + ADP + H(+). Its pathway is carbohydrate degradation; L-arabinose degradation via L-ribulose; D-xylulose 5-phosphate from L-arabinose (bacterial route): step 2/3. This Bacillus licheniformis (strain ATCC 14580 / DSM 13 / JCM 2505 / CCUG 7422 / NBRC 12200 / NCIMB 9375 / NCTC 10341 / NRRL NRS-1264 / Gibson 46) protein is Ribulokinase.